The sequence spans 605 residues: Inactive LRR receptor-like serine/threonine-protein kinase BIR2 (605 aa).

The N-terminal stretch at methionine 1–alanine 28 is a signal peptide. The Extracellular portion of the chain corresponds to alanine 29–glycine 229. The N-linked (GlcNAc...) asparagine glycan is linked to asparagine 58. 4 LRR repeats span residues cysteine 101–tryptophan 125, proline 127–cysteine 150, phenylalanine 152–alanine 173, and leucine 174–serine 197. Residues isoleucine 230–tryptophan 250 traverse the membrane as a helical segment. Over tryptophan 251 to valine 605 the chain is Cytoplasmic. Serine 271 is subject to Phosphoserine; by BAK1. Threonine 283 bears the Phosphothreonine; by BAK1 mark. Serine 286 carries the phosphoserine; by BAK1 modification. The residue at position 304 (threonine 304) is a Phosphothreonine; by BAK1. The region spanning phenylalanine 307–isoleucine 578 is the Protein kinase domain. An ATP-binding site is contributed by isoleucine 313–threonine 321. Position 330 is a phosphoserine; by BAK1 (serine 330). Position 335 (lysine 335) interacts with ATP. Serine 389 is modified (phosphoserine; by BAK1). Threonine 402 carries the phosphothreonine modification. Serine 448 and serine 462 each carry phosphoserine; by BAK1. Threonine 466 is modified (phosphothreonine; by BAK1). Phosphotyrosine is present on tyrosine 479. Threonine 482 carries the post-translational modification Phosphothreonine. Serine 486 carries the post-translational modification Phosphoserine. Position 533 is a phosphothreonine; by BAK1 (threonine 533).

Belongs to the protein kinase superfamily. Ser/Thr protein kinase family. As to quaternary structure, interacts constitutively with BAK1, when phosphorylated, thereby preventing interaction with the ligand-binding LRR-RLK FLS2. Upon infection, pathogen-associated molecular patterns (PAMP) perception leads to BIR2 release from the BAK1 complex and enables the recruitment of BAK1 into the FLS2 complex. Phosphorylated by BAK1, this interacts promotes interaction with BAK1.

The protein localises to the cell membrane. Its function is as follows. Pseudokinases lacking protein kinase activity and unable to bind ATP-analogs. Negative regulator of pathogen-associated molecular patterns- (PAMP-) triggered immunity by limiting BAK1-receptor complex formation in the absence of ligands. The protein is Inactive LRR receptor-like serine/threonine-protein kinase BIR2 of Arabidopsis thaliana (Mouse-ear cress).